A 1823-amino-acid polypeptide reads, in one-letter code: AF4/FMR2 family member lilli (1823 aa).

The span at 1 to 41 (MAQQQQQQHQQQQHHQQQQQQLQQQQQLLQYNNNSYNLNYN) shows a compositional bias: low complexity. Disordered stretches follow at residues 1-87 (MAQQ…DPEI), 126-305 (GFGS…ENHI), 422-544 (QQLT…KKKY), 570-626 (AGPG…WHLS), 686-712 (DSRH…YGVG), 753-1057 (PKNQ…DIPT), 1071-1287 (AAAQ…LKPR), 1322-1350 (ARQH…GART), 1413-1448 (FMLK…AEQL), 1480-1531 (ENSA…AIAS), 1547-1567 (TCSE…APRL), and 1715-1744 (GNTP…IVPQ). A compositionally biased stretch (basic and acidic residues) spans 53–79 (REKYERQQGIQSDDRETSLFGEPRRLN). 3 stretches are compositionally biased toward low complexity: residues 126 to 147 (GFGS…SSAS), 156 to 174 (QQQQ…QQQQ), and 205 to 249 (PSSS…TSSP). The span at 426–438 (PTPPKASPTPPVI) shows a compositional bias: pro residues. A Phosphothreonine modification is found at Thr-434. Positions 441–454 (LKTEKNHSLEKQDS) are enriched in basic and acidic residues. The segment covering 456–466 (LENDLELSESD) has biased composition (acidic residues). Ser-463 and Ser-465 each carry phosphoserine. Over residues 475–531 (SAGNSSNSSESDSSESGSEASSKGDPQQQQQQQQQHLLHQQQQHQQQQLLLQQQQQQ) the composition is skewed to low complexity. The segment covering 582-598 (AAGGVGSGSGSTGGGSS) has biased composition (gly residues). Over residues 599-612 (SSGMGTMSSSNSSN) the composition is skewed to low complexity. Low complexity predominate over residues 764 to 785 (SDSGSGSSGSGSSSSDSAGGSS). Positions 818-827 (HKAQPNSVTL) are enriched in polar residues. The segment covering 839–849 (PRQKKPRKKKM) has biased composition (basic residues). Phosphoserine occurs at positions 859 and 860. Low complexity-rich tracts occupy residues 877-906 (AATA…AAPA), 917-947 (QAQQ…SSQA), 962-979 (GTAS…VAAG), 1002-1057 (AAMA…DIPT), and 1102-1161 (NSSN…QLLQ). The a.T hook DNA-binding region spans 908–920 (KKGRGRPRKQAQQ). A phosphoserine mark is found at Ser-939 and Ser-941. Over residues 1172 to 1181 (TLKQSAQQRL) the composition is skewed to polar residues. Composition is skewed to low complexity over residues 1182–1203 (SSSD…ASSS) and 1253–1280 (QQQQ…QQQQ). Residues 1334–1344 (TQQNGHLSSRS) are compositionally biased toward polar residues. Residues 1480–1496 (ENSANASPNKLQQQNAR) are compositionally biased toward polar residues. Residue Ser-1486 is modified to Phosphoserine. A compositionally biased stretch (low complexity) spans 1497–1531 (QLPLSQSQLQHQHQHQHQLQQQQSQSTATGHAIAS). Residues 1555–1565 (TPPPAAPPPAP) show a composition bias toward pro residues. Low complexity predominate over residues 1715–1735 (GNTPSSISPSNSVGSQGSGSN).

The protein belongs to the AF4 family.

Its subcellular location is the nucleus. In terms of biological role, has a role in transcriptional regulation. Acts in parallel with the Ras/MAPK and the PI3K/PKB pathways in the control of cell identity and cellular growth. Essential for regulation of the cytoskeleton and cell growth but not for cell proliferation or growth rate. Required specifically for the microtubule-based basal transport of lipid droplets. Plays a partially redundant function downstream of Raf in cell fate specification in the developing eye. Pair-rule protein that regulates embryonic cellularization, gastrulation and segmentation. In Drosophila virilis (Fruit fly), this protein is AF4/FMR2 family member lilli.